The sequence spans 178 residues: Large ribosomal subunit protein uL6 (178 aa).

This sequence belongs to the universal ribosomal protein uL6 family. As to quaternary structure, part of the 50S ribosomal subunit.

Its function is as follows. This protein binds to the 23S rRNA, and is important in its secondary structure. It is located near the subunit interface in the base of the L7/L12 stalk, and near the tRNA binding site of the peptidyltransferase center. This is Large ribosomal subunit protein uL6 from Tropheryma whipplei (strain TW08/27) (Whipple's bacillus).